Here is a 305-residue protein sequence, read N- to C-terminus: MGCKTSKMCCPRLRKKKRQKAHQEGLTSKELNDLNAKSQEPNELLQKIKKYEQETRDILQKHQAEKAALADTHKADVEARTLELQAQAQKDRDADIAKLLLEQAATIKVEMEEKLAELQKSNEQEKASLTETHQQLIDSLQERVDELKTQLASFQEKMKRVEESVLSQDYRRHIQDHGSPGQFWEQEIQSLHFVIEMKSELIREQDKRLRSHKSTMERNLVLEERSRTLQQENEALKVQTQKQGAVTVRLSEELLSTQATLEKQIHLREKLEREKEQNLYRAVNGDIPQQFSLQSNAQELPVMVL.

G2 carries the N-myristoyl glycine lipid modification. The interval 13–41 (LRKKKRQKAHQEGLTSKELNDLNAKSQEP) is disordered. Coiled-coil stretches lie at residues 42–167 (NELL…SVLS) and 216–278 (MERN…KEQN).

It belongs to the CCDC69 family.

The protein resides in the cytoplasm. It is found in the cytoskeleton. The protein localises to the spindle. It localises to the midbody. May act as a scaffold to regulate the recruitment and assembly of spindle midzone components. In Xenopus tropicalis (Western clawed frog), this protein is Coiled-coil domain-containing protein 69 (ccdc69).